The following is a 321-amino-acid chain: Probable 3-hydroxyisobutyrate dehydrogenase, mitochondrial (321 aa).

NAD(+) contacts are provided by residues 23–52 (KTVG…IVFD), 86–87 (LP), and threonine 117. Lysine 192 is an active-site residue. Lysine 267 contacts NAD(+).

Belongs to the HIBADH-related family. 3-hydroxyisobutyrate dehydrogenase subfamily.

The protein resides in the mitochondrion. The enzyme catalyses 3-hydroxy-2-methylpropanoate + NAD(+) = 2-methyl-3-oxopropanoate + NADH + H(+). Its pathway is amino-acid degradation; L-valine degradation. The sequence is that of Probable 3-hydroxyisobutyrate dehydrogenase, mitochondrial (hibA) from Dictyostelium discoideum (Social amoeba).